We begin with the raw amino-acid sequence, 486 residues long: Probable peptidoglycan glycosyltransferase FtsW (486 aa).

The Cytoplasmic portion of the chain corresponds to 1–50 (MAGAARDRAFLDHFGGAGADRPCHVEGALMNDMSRQATRLDAIGGRYDPW). Residues 51 to 71 (LLGAAVTLASLGVVMVASSSI) traverse the membrane as a helical segment. Residues 72 to 77 (ELEASP) lie on the Periplasmic side of the membrane. The helical transmembrane segment at 78–98 (FYYLTRHLLFLGGGIALAFWA) threads the bilayer. The Cytoplasmic portion of the chain corresponds to 99–112 (MRTELKTIEQHNQM). Residues 113 to 133 (LLLACFVLLVVVFVPGLGSTV) form a helical membrane-spanning segment. The Periplasmic portion of the chain corresponds to 134–141 (NGAKRWIN). The chain crosses the membrane as a helical span at residues 142 to 162 (LGVSRFQVVESVKVFYIIWLA). Residues 163–174 (SYLVRFRDEVNA) are Cytoplasmic-facing. A helical membrane pass occupies residues 175 to 195 (TWQAMLKPVFVVGLLVGLLLL). The Periplasmic portion of the chain corresponds to 196–199 (QPDF). Residues 200 to 220 (GSSMLLLSVTACMLVLGGAPI) traverse the membrane as a helical segment. Residues 221 to 222 (GR) are Cytoplasmic-facing. Residues 223–243 (IILPILLLLPALVALVIFEPY) form a helical membrane-spanning segment. Residues 244 to 298 (RMRRVTSFMDPWVDQLGSGYQLSNALMAIGRGQWTGVGLGASVQKLNYLPESHTD) lie on the Periplasmic side of the membrane. Residues 299-319 (FIFSVIAEELGFVGVCGVIGL) form a helical membrane-spanning segment. The Cytoplasmic segment spans residues 320–342 (YALLVGRAFWLGMRCVEMKRHFS). A helical membrane pass occupies residues 343–363 (GYIAFGIGLWIAMQSFVSIGV). Residues 364 to 374 (NLGILPTKGLT) lie on the Periplasmic side of the membrane. A helical transmembrane segment spans residues 375–395 (LPLISSGGSSVLMTCLAMGVL). Residues 396 to 486 (LRVSYEADRA…RVEPTFGRIA (91 aa)) are Cytoplasmic-facing.

Belongs to the SEDS family. FtsW subfamily.

The protein resides in the cell inner membrane. It catalyses the reaction [GlcNAc-(1-&gt;4)-Mur2Ac(oyl-L-Ala-gamma-D-Glu-L-Lys-D-Ala-D-Ala)](n)-di-trans,octa-cis-undecaprenyl diphosphate + beta-D-GlcNAc-(1-&gt;4)-Mur2Ac(oyl-L-Ala-gamma-D-Glu-L-Lys-D-Ala-D-Ala)-di-trans,octa-cis-undecaprenyl diphosphate = [GlcNAc-(1-&gt;4)-Mur2Ac(oyl-L-Ala-gamma-D-Glu-L-Lys-D-Ala-D-Ala)](n+1)-di-trans,octa-cis-undecaprenyl diphosphate + di-trans,octa-cis-undecaprenyl diphosphate + H(+). It participates in cell wall biogenesis; peptidoglycan biosynthesis. Functionally, peptidoglycan polymerase that is essential for cell division. The polypeptide is Probable peptidoglycan glycosyltransferase FtsW (Xanthomonas oryzae pv. oryzae (strain KACC10331 / KXO85)).